Consider the following 845-residue polypeptide: Putative DEAD-box ATP-dependent RNA helicase 33 (845 aa).

2 disordered regions span residues 129–149 (GHPD…PMSP) and 282–302 (KFRK…NEGK). Residues 289–298 (STEEDSDEEG) are compositionally biased toward acidic residues. Residues 375–403 (KRFDESCISPLTLKALSASGIVKMTRVQD) carry the Q motif motif. Residues 406-590 (LSECLDGKDA…QLVLKRDHSY (185 aa)) form the Helicase ATP-binding domain. 419 to 426 (AKTGTGKS) lines the ATP pocket. Positions 538–541 (DEAD) match the DEAD box motif. Residues 624–778 (LLKEHINNMP…QVDQSMAKID (155 aa)) form the Helicase C-terminal domain.

It belongs to the DEAD box helicase family.

It catalyses the reaction ATP + H2O = ADP + phosphate + H(+). The polypeptide is Putative DEAD-box ATP-dependent RNA helicase 33 (RH33) (Arabidopsis thaliana (Mouse-ear cress)).